The sequence spans 219 residues: Octanoyltransferase (219 aa).

Positions 32–207 (ADSGDEIWLL…HLVRQLGYAQ (176 aa)) constitute a BPL/LPL catalytic domain. Substrate is bound by residues 71 to 78 (RGGQVTYH), 138 to 140 (SLG), and 151 to 153 (GLA). The Acyl-thioester intermediate role is filled by Cys169.

This sequence belongs to the LipB family.

Its subcellular location is the cytoplasm. The catalysed reaction is octanoyl-[ACP] + L-lysyl-[protein] = N(6)-octanoyl-L-lysyl-[protein] + holo-[ACP] + H(+). It participates in protein modification; protein lipoylation via endogenous pathway; protein N(6)-(lipoyl)lysine from octanoyl-[acyl-carrier-protein]: step 1/2. Functionally, catalyzes the transfer of endogenously produced octanoic acid from octanoyl-acyl-carrier-protein onto the lipoyl domains of lipoate-dependent enzymes. Lipoyl-ACP can also act as a substrate although octanoyl-ACP is likely to be the physiological substrate. In Stutzerimonas stutzeri (strain A1501) (Pseudomonas stutzeri), this protein is Octanoyltransferase.